The sequence spans 197 residues: Ribonuclease HII (197 aa).

An RNase H type-2 domain is found at 9 to 197 (ELIAGVDEVG…APVKKALEQF (189 aa)). D15, E16, and D107 together coordinate a divalent metal cation.

The protein belongs to the RNase HII family. Mn(2+) is required as a cofactor. It depends on Mg(2+) as a cofactor.

The protein resides in the cytoplasm. The enzyme catalyses Endonucleolytic cleavage to 5'-phosphomonoester.. In terms of biological role, endonuclease that specifically degrades the RNA of RNA-DNA hybrids. The polypeptide is Ribonuclease HII (Haemophilus influenzae (strain 86-028NP)).